A 412-amino-acid chain; its full sequence is Serine/threonine transporter SstT (412 aa).

A run of 10 helical transmembrane segments spans residues 16–36 (LVAQ…FLPG), 44–64 (LGDL…FVLV), 82–102 (IIVL…LASF), 115–135 (TDVI…FNIV), 141–161 (ALLN…GFAF), 179–199 (VTLI…GLVA), 217–237 (LLVL…LIVF), 298–318 (MGGA…TLGI), 330–350 (LLAA…LLLI), and 357–377 (FGIS…IGVV).

The protein belongs to the dicarboxylate/amino acid:cation symporter (DAACS) (TC 2.A.23) family.

The protein localises to the cell inner membrane. It catalyses the reaction L-serine(in) + Na(+)(in) = L-serine(out) + Na(+)(out). The enzyme catalyses L-threonine(in) + Na(+)(in) = L-threonine(out) + Na(+)(out). Its function is as follows. Involved in the import of serine and threonine into the cell, with the concomitant import of sodium (symport system). The polypeptide is Serine/threonine transporter SstT (Stutzerimonas stutzeri (strain A1501) (Pseudomonas stutzeri)).